The primary structure comprises 364 residues: Dihydroorotate dehydrogenase (quinone) (364 aa).

Residues 61 to 65 (AGYDK) and Thr85 each bind FMN. Residue Lys65 participates in substrate binding. 110-114 (NRLGF) serves as a coordination point for substrate. FMN contacts are provided by Asn139 and Asn170. Asn170 lines the substrate pocket. Residue Ser173 is the Nucleophile of the active site. Asn175 provides a ligand contact to substrate. FMN-binding residues include Lys215 and Ser243. Residue 244-245 (NT) coordinates substrate. FMN-binding positions include Gly266, Gly295, and 316 to 317 (YT).

The protein belongs to the dihydroorotate dehydrogenase family. Type 2 subfamily. As to quaternary structure, monomer. FMN is required as a cofactor.

The protein resides in the cell membrane. It carries out the reaction (S)-dihydroorotate + a quinone = orotate + a quinol. It participates in pyrimidine metabolism; UMP biosynthesis via de novo pathway; orotate from (S)-dihydroorotate (quinone route): step 1/1. In terms of biological role, catalyzes the conversion of dihydroorotate to orotate with quinone as electron acceptor. The sequence is that of Dihydroorotate dehydrogenase (quinone) from Brucella canis (strain ATCC 23365 / NCTC 10854 / RM-666).